The following is a 490-amino-acid chain: Probable cytosol aminopeptidase (490 aa).

The Mn(2+) site is built by Lys257 and Asp262. The active site involves Lys269. 3 residues coordinate Mn(2+): Asp281, Asp341, and Glu343. Residue Arg345 is part of the active site.

The protein belongs to the peptidase M17 family. Mn(2+) serves as cofactor.

It localises to the cytoplasm. The enzyme catalyses Release of an N-terminal amino acid, Xaa-|-Yaa-, in which Xaa is preferably Leu, but may be other amino acids including Pro although not Arg or Lys, and Yaa may be Pro. Amino acid amides and methyl esters are also readily hydrolyzed, but rates on arylamides are exceedingly low.. The catalysed reaction is Release of an N-terminal amino acid, preferentially leucine, but not glutamic or aspartic acids.. Presumably involved in the processing and regular turnover of intracellular proteins. Catalyzes the removal of unsubstituted N-terminal amino acids from various peptides. This Prochlorococcus marinus (strain AS9601) protein is Probable cytosol aminopeptidase.